An 872-amino-acid polypeptide reads, in one-letter code: Protein SEY1 (872 aa).

Over 1-749 the chain is Cytoplasmic; sequence MVANGHFAGV…KRSAIGGITQ (749 aa). Positions 49–307 constitute a GB1/RHD3-type G domain; it reads GFNYHLISVF…IPADGFAVYA (259 aa). 59–66 serves as a coordination point for GTP; the sequence is GSQSTGKS. Positions 482–504 form a coiled coil; that stretch reads SNYQQELSLYQKDLENIGGQLRR. Residues 676 to 704 form a disordered region; sequence LDKWIGHTPSSATPADEEDLTPIGGVDED. The span at 690 to 704 shows a compositional bias: acidic residues; it reads ADEEDLTPIGGVDED. The helical transmembrane segment at 750–770 threads the bilayer; sequence VPLYFYGLLLALGWNEIVAVL. Residues 771-773 lie on the Lumenal side of the membrane; the sequence is RNP. The helical transmembrane segment at 774–794 threads the bilayer; that stretch reads AYFLLLFVCAVTAYVTYQLNL. At 795–872 the chain is on the cytoplasmic side; sequence WGPIIKMTEA…IDDADDDDDF (78 aa). A disordered region spans residues 849-872; that stretch reads NRKSAGGFQNNRSHIDDADDDDDF.

This sequence belongs to the TRAFAC class dynamin-like GTPase superfamily. GB1/RHD3 GTPase family. RHD3 subfamily.

It is found in the endoplasmic reticulum membrane. In terms of biological role, cooperates with the reticulon proteins and tubule-shaping DP1 family proteins to generate and maintain the structure of the tubular endoplasmic reticulum network. Has GTPase activity, which is required for its function in ER organization. This is Protein SEY1 from Paracoccidioides brasiliensis (strain Pb18).